Here is a 532-residue protein sequence, read N- to C-terminus: Transcriptional regulatory protein RtcR (532 aa).

Residues 186-424 (IATRNPHFNR…LSASVTRMAT (239 aa)) form the Sigma-54 factor interaction domain. ATP is bound by residues 215–222 (GPTGAGKS) and 281–290 (ANGGMLFLDE). Positions 485 to 504 (KSLSAAGRQLFDVSRQGKAS) form a DNA-binding region, H-T-H motif.

Functionally, transcriptional repressor of the rtcAB genes. Interacts with sigma-54. The protein is Transcriptional regulatory protein RtcR (rtcR) of Escherichia coli (strain K12).